The sequence spans 169 residues: Peptide methionine sulfoxide reductase MsrA (169 aa).

Cys10 is an active-site residue.

The protein belongs to the MsrA Met sulfoxide reductase family.

It carries out the reaction L-methionyl-[protein] + [thioredoxin]-disulfide + H2O = L-methionyl-(S)-S-oxide-[protein] + [thioredoxin]-dithiol. The catalysed reaction is [thioredoxin]-disulfide + L-methionine + H2O = L-methionine (S)-S-oxide + [thioredoxin]-dithiol. Functionally, has an important function as a repair enzyme for proteins that have been inactivated by oxidation. Catalyzes the reversible oxidation-reduction of methionine sulfoxide in proteins to methionine. The chain is Peptide methionine sulfoxide reductase MsrA from Streptococcus pyogenes serotype M6 (strain ATCC BAA-946 / MGAS10394).